The sequence spans 215 residues: Mediator of RNA polymerase II transcription subunit 20 (215 aa).

Belongs to the Mediator complex subunit 20 family. Component of the Mediator complex.

It is found in the nucleus. Component of the Mediator complex, a coactivator involved in the regulated transcription of nearly all RNA polymerase II-dependent genes. Mediator functions as a bridge to convey information from gene-specific regulatory proteins to the basal RNA polymerase II transcription machinery. Mediator is recruited to promoters by direct interactions with regulatory proteins and serves as a scaffold for the assembly of a functional preinitiation complex with RNA polymerase II and the general transcription factors. This chain is Mediator of RNA polymerase II transcription subunit 20 (SRB2), found in Candida glabrata (strain ATCC 2001 / BCRC 20586 / JCM 3761 / NBRC 0622 / NRRL Y-65 / CBS 138) (Yeast).